Consider the following 174-residue polypeptide: Chorion protein S18 (174 aa).

A signal peptide spans 1-17 (MMKFMCIFICAVAAVSA). Positions 154–165 (AAAASSSVAGVA) are enriched in low complexity. Positions 154-174 (AAAASSSVAGVAKKGYRKSSY) are disordered.

Belongs to the chorion protein S15/S18 family.

It localises to the secreted. Chorion membrane (egg shell) protein; plays a role in protecting the egg from the environment. The chain is Chorion protein S18 (Cp18) from Drosophila subobscura (Fruit fly).